The chain runs to 123 residues: Large ribosomal subunit protein bL12 (123 aa).

It belongs to the bacterial ribosomal protein bL12 family. In terms of assembly, homodimer. Part of the ribosomal stalk of the 50S ribosomal subunit. Forms a multimeric L10(L12)X complex, where L10 forms an elongated spine to which 2 to 4 L12 dimers bind in a sequential fashion. Binds GTP-bound translation factors.

Functionally, forms part of the ribosomal stalk which helps the ribosome interact with GTP-bound translation factors. Is thus essential for accurate translation. This Maricaulis maris (strain MCS10) (Caulobacter maris) protein is Large ribosomal subunit protein bL12.